An 84-amino-acid chain; its full sequence is Large ribosomal subunit protein bL27 (84 aa).

The disordered stretch occupies residues 1–21; sequence MAHKKGASSTRNGRDSNAQRL. Residues 7 to 19 show a composition bias toward polar residues; the sequence is ASSTRNGRDSNAQ.

The protein belongs to the bacterial ribosomal protein bL27 family.

The sequence is that of Large ribosomal subunit protein bL27 from Clavibacter sepedonicus (Clavibacter michiganensis subsp. sepedonicus).